A 508-amino-acid polypeptide reads, in one-letter code: Photosystem II CP47 reaction center protein (508 aa).

Transmembrane regions (helical) follow at residues 21-36 (SVHIMHTALVAGWAGS), 101-115 (IVFSGLCFLAAIWHW), 140-156 (GIHLFLAGVACFGFGAF), 203-218 (IAAGTLGILAGLFHLS), 237-252 (VLSSSIAAVFFAAFVV), and 457-472 (SFALLFFFGHIWHGAR).

This sequence belongs to the PsbB/PsbC family. PsbB subfamily. In terms of assembly, PSII is composed of 1 copy each of membrane proteins PsbA, PsbB, PsbC, PsbD, PsbE, PsbF, PsbH, PsbI, PsbJ, PsbK, PsbL, PsbM, PsbT, PsbX, PsbY, PsbZ, Psb30/Ycf12, at least 3 peripheral proteins of the oxygen-evolving complex and a large number of cofactors. It forms dimeric complexes. The cofactor is Binds multiple chlorophylls. PSII binds additional chlorophylls, carotenoids and specific lipids..

Its subcellular location is the plastid. The protein resides in the chloroplast thylakoid membrane. In terms of biological role, one of the components of the core complex of photosystem II (PSII). It binds chlorophyll and helps catalyze the primary light-induced photochemical processes of PSII. PSII is a light-driven water:plastoquinone oxidoreductase, using light energy to abstract electrons from H(2)O, generating O(2) and a proton gradient subsequently used for ATP formation. The chain is Photosystem II CP47 reaction center protein from Phaseolus vulgaris (Kidney bean).